A 117-amino-acid chain; its full sequence is Non-specific lipid-transfer protein 3 (117 aa).

A signal peptide spans 1–25; the sequence is MAGLVKLSCLVLACMIVAGPIATNA. Disulfide bonds link Cys-29/Cys-76, Cys-39/Cys-53, Cys-54/Cys-99, and Cys-74/Cys-113.

It belongs to the plant LTP family.

Plant non-specific lipid-transfer proteins transfer phospholipids as well as galactolipids across membranes. May play a role in wax or cutin deposition in the cell walls of expanding epidermal cells and certain secretory tissues. This chain is Non-specific lipid-transfer protein 3 (LTP3), found in Brassica napus (Rape).